The primary structure comprises 175 residues: Ribosome maturation factor RimM (175 aa).

Positions 96 to 175 constitute a PRC barrel domain; it reads EGDYYWHDLI…TIEVDWDAGF (80 aa).

Belongs to the RimM family. As to quaternary structure, binds ribosomal protein uS19.

It is found in the cytoplasm. In terms of biological role, an accessory protein needed during the final step in the assembly of 30S ribosomal subunit, possibly for assembly of the head region. Essential for efficient processing of 16S rRNA. May be needed both before and after RbfA during the maturation of 16S rRNA. It has affinity for free ribosomal 30S subunits but not for 70S ribosomes. This Haemophilus influenzae (strain PittEE) protein is Ribosome maturation factor RimM.